Reading from the N-terminus, the 315-residue chain is Putative protein phosphatase 2C 24 (315 aa).

The PPM-type phosphatase domain occupies 71–314 (ALRMEAASCF…DDITVVVAYI (244 aa)). The Mn(2+) site is built by aspartate 102, glycine 103, aspartate 238, and aspartate 305.

This sequence belongs to the PP2C family. Mg(2+) serves as cofactor. The cofactor is Mn(2+).

The catalysed reaction is O-phospho-L-seryl-[protein] + H2O = L-seryl-[protein] + phosphate. It carries out the reaction O-phospho-L-threonyl-[protein] + H2O = L-threonyl-[protein] + phosphate. The polypeptide is Putative protein phosphatase 2C 24 (Oryza sativa subsp. japonica (Rice)).